A 428-amino-acid polypeptide reads, in one-letter code: Probable glucose-6-phosphate isomerase (428 aa).

E269 acts as the Proton donor in catalysis. Active-site residues include H290 and K401.

This sequence belongs to the GPI family.

It is found in the cytoplasm. It catalyses the reaction alpha-D-glucose 6-phosphate = beta-D-fructose 6-phosphate. It functions in the pathway carbohydrate biosynthesis; gluconeogenesis. It participates in carbohydrate degradation; glycolysis; D-glyceraldehyde 3-phosphate and glycerone phosphate from D-glucose: step 2/4. In terms of biological role, catalyzes the reversible isomerization of glucose-6-phosphate to fructose-6-phosphate. The sequence is that of Probable glucose-6-phosphate isomerase from Natronomonas pharaonis (strain ATCC 35678 / DSM 2160 / CIP 103997 / JCM 8858 / NBRC 14720 / NCIMB 2260 / Gabara) (Halobacterium pharaonis).